The chain runs to 455 residues: Bifunctional protein GlmU (455 aa).

Residues 1 to 226 (MSLDIVILAA…PMEVQGANDR (226 aa)) form a pyrophosphorylase region. UDP-N-acetyl-alpha-D-glucosamine contacts are provided by residues 8–11 (LAAG), K22, Q73, 78–79 (GT), 99–101 (YGD), G136, E151, N166, and N224. D101 contacts Mg(2+). Residue N224 participates in Mg(2+) binding. The tract at residues 227–247 (RQLSELERHYQLREGRRLMAQ) is linker. The segment at 248–455 (GVTLRDPARF…WKRPEKIKKS (208 aa)) is N-acetyltransferase. R330 and K348 together coordinate UDP-N-acetyl-alpha-D-glucosamine. The active-site Proton acceptor is H360. Positions 363 and 374 each coordinate UDP-N-acetyl-alpha-D-glucosamine. Acetyl-CoA-binding positions include A377, 383–384 (NY), S402, A420, and R437.

The protein in the N-terminal section; belongs to the N-acetylglucosamine-1-phosphate uridyltransferase family. This sequence in the C-terminal section; belongs to the transferase hexapeptide repeat family. In terms of assembly, homotrimer. Mg(2+) serves as cofactor.

Its subcellular location is the cytoplasm. It carries out the reaction alpha-D-glucosamine 1-phosphate + acetyl-CoA = N-acetyl-alpha-D-glucosamine 1-phosphate + CoA + H(+). It catalyses the reaction N-acetyl-alpha-D-glucosamine 1-phosphate + UTP + H(+) = UDP-N-acetyl-alpha-D-glucosamine + diphosphate. Its pathway is nucleotide-sugar biosynthesis; UDP-N-acetyl-alpha-D-glucosamine biosynthesis; N-acetyl-alpha-D-glucosamine 1-phosphate from alpha-D-glucosamine 6-phosphate (route II): step 2/2. It functions in the pathway nucleotide-sugar biosynthesis; UDP-N-acetyl-alpha-D-glucosamine biosynthesis; UDP-N-acetyl-alpha-D-glucosamine from N-acetyl-alpha-D-glucosamine 1-phosphate: step 1/1. The protein operates within bacterial outer membrane biogenesis; LPS lipid A biosynthesis. Functionally, catalyzes the last two sequential reactions in the de novo biosynthetic pathway for UDP-N-acetylglucosamine (UDP-GlcNAc). The C-terminal domain catalyzes the transfer of acetyl group from acetyl coenzyme A to glucosamine-1-phosphate (GlcN-1-P) to produce N-acetylglucosamine-1-phosphate (GlcNAc-1-P), which is converted into UDP-GlcNAc by the transfer of uridine 5-monophosphate (from uridine 5-triphosphate), a reaction catalyzed by the N-terminal domain. The sequence is that of Bifunctional protein GlmU from Pseudomonas entomophila (strain L48).